The sequence spans 439 residues: Adenylosuccinate synthetase (439 aa).

Residues 14-20 and 42-44 each bind GTP; these read GDEGKGK and GHT. The Proton acceptor role is filled by Asp15. Residues Asp15 and Gly42 each coordinate Mg(2+). Residues 15 to 18, 40 to 43, Thr130, Arg144, Gln225, Thr240, and Arg304 contribute to the IMP site; these read DEGK and NAGH. Catalysis depends on His43, which acts as the Proton donor. 300 to 306 lines the substrate pocket; sequence TTTGRRR. GTP-binding positions include Arg306, 332–334, and 414–416; these read KLD and SLG.

It belongs to the adenylosuccinate synthetase family. Homodimer. Requires Mg(2+) as cofactor.

Its subcellular location is the cytoplasm. It carries out the reaction IMP + L-aspartate + GTP = N(6)-(1,2-dicarboxyethyl)-AMP + GDP + phosphate + 2 H(+). It functions in the pathway purine metabolism; AMP biosynthesis via de novo pathway; AMP from IMP: step 1/2. Plays an important role in the de novo pathway of purine nucleotide biosynthesis. Catalyzes the first committed step in the biosynthesis of AMP from IMP. This Synechococcus sp. (strain CC9902) protein is Adenylosuccinate synthetase.